The chain runs to 428 residues: Glutamate-1-semialdehyde 2,1-aminomutase (428 aa).

N6-(pyridoxal phosphate)lysine is present on lysine 265.

Belongs to the class-III pyridoxal-phosphate-dependent aminotransferase family. HemL subfamily. In terms of assembly, homodimer. It depends on pyridoxal 5'-phosphate as a cofactor.

The protein resides in the cytoplasm. The catalysed reaction is (S)-4-amino-5-oxopentanoate = 5-aminolevulinate. It functions in the pathway porphyrin-containing compound metabolism; protoporphyrin-IX biosynthesis; 5-aminolevulinate from L-glutamyl-tRNA(Glu): step 2/2. This is Glutamate-1-semialdehyde 2,1-aminomutase from Legionella pneumophila (strain Paris).